The following is a 564-amino-acid chain: Nucleoprotein (564 aa).

Residues 54-236 (LRKNKRGEED…VTKDESSINI (183 aa)) are binding site for the cap structure m7GTP. The Mn(2+) site is built by D380 and E382. Positions 390, 497, 500, and 525 each coordinate Zn(2+). Residue D529 coordinates Mn(2+).

The protein belongs to the arenaviridae nucleocapsid protein family. In terms of assembly, homomultimerizes to form the nucleocapsid. Binds to viral genomic RNA. Interacts with glycoprotein G2. Interacts with protein Z; this interaction probably directs the encapsidated genome to budding sites. Interacts with protein L; this interaction does not interfere with Z-L interaction. Interacts with host IKBKE (via Protein kinase domain); the interaction inhibits IKBKE kinase activity.

It is found in the virion. The protein localises to the host cytoplasm. In terms of biological role, encapsidates the genome, protecting it from nucleases. The encapsidated genomic RNA is termed the nucleocapsid (NC). Serves as template for viral transcription and replication. The increased presence of protein N in host cell does not seem to trigger the switch from transcription to replication as observed in other negative strain RNA viruses. Through the interaction with host IKBKE, strongly inhibits the phosphorylation and nuclear translocation of host IRF3, a protein involved in interferon activation pathway, leading to the inhibition of interferon-beta and IRF3-dependent promoters activation. Also encodes a functional 3'-5' exoribonuclease that degrades preferentially dsRNA substrates and thereby participates in the suppression of interferon induction. The sequence is that of Nucleoprotein from Calomys callosus (Large vesper mouse).